We begin with the raw amino-acid sequence, 75 residues long: Defensin-like protein 58 (75 aa).

The signal sequence occupies residues 1 to 23 (MNITKRYVVIFFLVMLTKSLSNS). 4 disulfides stabilise this stretch: C39/C73, C43/C66, C52/C71, and C56/C72.

The protein belongs to the DEFL family.

The protein resides in the secreted. This is Defensin-like protein 58 from Arabidopsis thaliana (Mouse-ear cress).